The sequence spans 262 residues: Ornithine carbamoyltransferase (262 aa).

Carbamoyl phosphate contacts are provided by residues 3–7, Q30, R54, and 81–84; these read STRTR and HPTQ. Residues N114, D178, and 182 to 183 each bind L-ornithine; that span reads SM. Carbamoyl phosphate is bound by residues 219 to 222 and T247; that span reads HCLP.

The protein belongs to the aspartate/ornithine carbamoyltransferase superfamily. OTCase family.

It localises to the cytoplasm. It carries out the reaction carbamoyl phosphate + L-ornithine = L-citrulline + phosphate + H(+). It participates in amino-acid biosynthesis; L-arginine biosynthesis; L-arginine from L-ornithine and carbamoyl phosphate: step 1/3. Its function is as follows. Reversibly catalyzes the transfer of the carbamoyl group from carbamoyl phosphate (CP) to the N(epsilon) atom of ornithine (ORN) to produce L-citrulline. This is Ornithine carbamoyltransferase (argF) from Neisseria lactamica.